Here is a 387-residue protein sequence, read N- to C-terminus: Ferrochelatase (387 aa).

The tract at residues 1 to 318 (MGRVGVLLLN…VFIDALAQMV (318 aa)) is ferrochelatase. His196 and Glu277 together coordinate Fe cation. Residues 319 to 387 (MDSLNDPPCT…QGPLHFVGLL (69 aa)) are hlip domain.

The protein in the N-terminal section; belongs to the ferrochelatase family. This sequence in the C-terminal section; belongs to the Hlip family.

The protein resides in the cytoplasm. It catalyses the reaction heme b + 2 H(+) = protoporphyrin IX + Fe(2+). It participates in porphyrin-containing compound metabolism; protoheme biosynthesis; protoheme from protoporphyrin-IX: step 1/1. Functionally, catalyzes the ferrous insertion into protoporphyrin IX. The Hlip proteins might regulate tetrapyrrole biosynthesis, maybe at the level of aminolevulinic acid synthesis. Deletion of 4 to 5 members of the Hlip family (always including this member) suggests the proteins are involved in regulation of chlorophyll biosynthesis, in stabilization of chlorophyll-binding proteins and/or in reuse of chlorophylls, and may regulate tetrapyrrole biosynthesis. The Hlip proteins probably stabilize PSII assembly intermediates. This chain is Ferrochelatase, found in Synechocystis sp. (strain ATCC 27184 / PCC 6803 / Kazusa).